An 83-amino-acid chain; its full sequence is Protein YqgD (83 aa).

Belongs to the YqgD family.

The protein is Protein YqgD (yqgD) of Escherichia coli (strain K12).